Here is a 297-residue protein sequence, read N- to C-terminus: Giardin subunit alpha-6 (297 aa).

4 Annexin repeats span residues 3-72, 74-146, 153-222, and 226-295; these read TTVQ…AYLW, KPGD…HWIL, FDID…AAHY, and HPAR…ILWR.

The protein belongs to the annexin family. Giardin subunit alpha subfamily.

Its subcellular location is the cytoplasm. The protein localises to the cytoskeleton. Its function is as follows. Giardins are involved in parasite attachment to the intestinal mucosa and in the cytoskeletal disassembly and reassembly that marks the transition from infectious trophozoite to transmissible cyst. They may interact with other cytoskeletal proteins such as microtubules in the microribbons or crossbridges, to maintain the integrity of the ventral disk. The sequence is that of Giardin subunit alpha-6 from Giardia intestinalis (Giardia lamblia).